Reading from the N-terminus, the 950-residue chain is Coatomer subunit beta-2 (950 aa).

HEAT repeat units follow at residues 92–126 (PEMILICQNLRNNLHHPNEYIRGVTLRFLCRLSEP), 127–164 (EVLEPLVPSILENLDHRHHFIRRHALSAISSIYRLPHG), 275–312 (TAVRAAANTYCELLSSQSDNNVKLIVLDRLNELRTSHR), 313–350 (DVMVDVVMDVLRALASPNLDVKRKVLDLVLDLLTARNV), and 392–429 (EVAGSVVHLLMDFLGDTNVAAAVDVVLFVREIIETNPK).

Oligomeric complex that consists of at least the alpha, beta, beta', gamma, delta, epsilon and zeta subunits.

Its subcellular location is the cytoplasm. It localises to the golgi apparatus membrane. The protein resides in the cytoplasmic vesicle. It is found in the COPI-coated vesicle membrane. The coatomer is a cytosolic protein complex that binds to dilysine motifs and reversibly associates with Golgi non-clathrin-coated vesicles, which further mediate biosynthetic protein transport from the ER, via the Golgi up to the trans Golgi network. Coatomer complex is required for budding from Golgi membranes, and is essential for the retrograde Golgi-to-ER transport of dilysine-tagged proteins. The polypeptide is Coatomer subunit beta-2 (Oryza sativa subsp. japonica (Rice)).